The chain runs to 525 residues: Acetyl-CoA hydrolase (525 aa).

280–284 (GIGNI) contacts CoA. The active-site 5-glutamyl coenzyme A thioester intermediate is the glutamate 305. 2 residues coordinate CoA: asparagine 395 and glycine 399.

This sequence belongs to the acetyl-CoA hydrolase/transferase family.

It localises to the cytoplasm. It catalyses the reaction acetyl-CoA + H2O = acetate + CoA + H(+). Required for utilization of acetate. The protein is Acetyl-CoA hydrolase (acu-8) of Neurospora crassa (strain ATCC 24698 / 74-OR23-1A / CBS 708.71 / DSM 1257 / FGSC 987).